The following is an 853-amino-acid chain: DNA mismatch repair protein MutS (853 aa).

Residue Gly-614 to Ser-621 participates in ATP binding.

This sequence belongs to the DNA mismatch repair MutS family.

In terms of biological role, this protein is involved in the repair of mismatches in DNA. It is possible that it carries out the mismatch recognition step. This protein has a weak ATPase activity. The sequence is that of DNA mismatch repair protein MutS from Escherichia coli (strain SMS-3-5 / SECEC).